A 345-amino-acid chain; its full sequence is Probable fructokinase-3 (345 aa).

The protein belongs to the carbohydrate kinase PfkB family.

The enzyme catalyses D-fructose + ATP = D-fructose 6-phosphate + ADP + H(+). The protein operates within glycan biosynthesis; starch biosynthesis. Its function is as follows. May play an important role in maintaining the flux of carbon towards starch formation. This is Probable fructokinase-3 from Arabidopsis thaliana (Mouse-ear cress).